The primary structure comprises 449 residues: Gamma conglutin 1 (449 aa).

An N-terminal signal peptide occupies residues 1-33 (MARNMAHILHILVISLSYSFLFVSSSSQDSQSL). One can recognise a Peptidase A1 domain in the interval 60–429 (HWANIHKRTP…DLERSRVGFN (370 aa)). Disulfide bonds link cysteine 88/cysteine 178, cysteine 102/cysteine 115, cysteine 107/cysteine 133, cysteine 118/cysteine 128, and cysteine 350/cysteine 391. Asparagine 130 carries an N-linked (GlcNAc...) asparagine glycan.

The protein belongs to the peptidase A1 family. Two-subunit monomeric unit made of alpha and beta subunits coupled by disulfide bonds (at pH 4.5 and under non-reducing conditions). Can also form oligomers including dimer, tetramer and cyclic hexamer (trimer of dimers) (at pH &gt; 5.5). Component of globulins complexes which accumulate in seeds. Interacts with flavonoids (e.g. apigenin glucosides) present in globulins complexes. Forms a static complex with vitexin. Undergoes very complex post-translational maturation; the proteolytic processing leading to the formation of two alpha and beta subunits is incomplete, leaving a certain amount of the protein in an uncut form. Post-translationally, glycosylated on alpha chain. In terms of tissue distribution, expressed in developing cotyledons and in the embryonic axis of germinating seeds. Accumulates in seeds, especially in the protein bodies of developing cotyledonary cells (at protein level). Also detected, at low levels, in plumules and radicles.

It is found in the secreted. The protein resides in the extracellular space. Functionally, sulfur-rich seed storage protein that remains undegraded at germination. The sequence is that of Gamma conglutin 1 from Lupinus angustifolius (Narrow-leaved blue lupine).